A 957-amino-acid chain; its full sequence is Glycine dehydrogenase (decarboxylating) (957 aa).

K708 carries the N6-(pyridoxal phosphate)lysine modification.

Belongs to the GcvP family. The glycine cleavage system is composed of four proteins: P, T, L and H. Requires pyridoxal 5'-phosphate as cofactor.

It carries out the reaction N(6)-[(R)-lipoyl]-L-lysyl-[glycine-cleavage complex H protein] + glycine + H(+) = N(6)-[(R)-S(8)-aminomethyldihydrolipoyl]-L-lysyl-[glycine-cleavage complex H protein] + CO2. Functionally, the glycine cleavage system catalyzes the degradation of glycine. The P protein binds the alpha-amino group of glycine through its pyridoxal phosphate cofactor; CO(2) is released and the remaining methylamine moiety is then transferred to the lipoamide cofactor of the H protein. This Enterobacter sp. (strain 638) protein is Glycine dehydrogenase (decarboxylating).